The primary structure comprises 683 residues: Heat shock protein homolog ECU03_0520 (683 aa).

It belongs to the heat shock protein 70 family.

It is found in the cytoplasm. In Encephalitozoon cuniculi (strain GB-M1) (Microsporidian parasite), this protein is Heat shock protein homolog ECU03_0520.